A 605-amino-acid polypeptide reads, in one-letter code: Apoptosis-inducing factor 3 (605 aa).

The segment at Lys22–Thr45 is disordered. One can recognise a Rieske domain in the interval Ala70–Val165. [2Fe-2S] cluster-binding residues include Cys109, His111, Cys128, and His131. FAD contacts are provided by residues Gly201 to Ala205, Arg235, Lys240, Val270, Asp467, and Trp514.

The protein belongs to the FAD-dependent oxidoreductase family. Ubiquitous. Expressed in bone marrow, cerebral cortex, liver, ovary, thymus, thyroid gland and tongue (at protein level).

The protein localises to the mitochondrion. Induces apoptosis through a caspase dependent pathway. Reduces mitochondrial membrane potential. The sequence is that of Apoptosis-inducing factor 3 (AIFM3) from Homo sapiens (Human).